The following is a 287-amino-acid chain: ATP synthase gamma chain (287 aa).

It belongs to the ATPase gamma chain family. As to quaternary structure, F-type ATPases have 2 components, CF(1) - the catalytic core - and CF(0) - the membrane proton channel. CF(1) has five subunits: alpha(3), beta(3), gamma(1), delta(1), epsilon(1). CF(0) has three main subunits: a, b and c.

The protein localises to the cell inner membrane. Functionally, produces ATP from ADP in the presence of a proton gradient across the membrane. The gamma chain is believed to be important in regulating ATPase activity and the flow of protons through the CF(0) complex. The protein is ATP synthase gamma chain of Proteus mirabilis (strain HI4320).